The following is a 429-amino-acid chain: TNF receptor-associated factor family protein DDB_G0267744 (429 aa).

An RING-type; degenerate zinc finger spans residues 22–60; that stretch reads CVICSHLQVDIYQCVEGHFACKNCFLKMIELKKQCMTCR. TRAF-type zinc fingers lie at residues 151–203 and 204–265; these read HHLK…GEFN and NHQD…SNSE.

Belongs to the TNF receptor-associated factor family.

The protein localises to the cytoplasm. Probable adapter protein and signal transducer that links members of the tumor necrosis factor receptor family to different signaling pathways by association with the receptor cytoplasmic domain and kinases. This is TNF receptor-associated factor family protein DDB_G0267744 from Dictyostelium discoideum (Social amoeba).